The following is a 339-amino-acid chain: S-adenosylmethionine:tRNA ribosyltransferase-isomerase (339 aa).

It belongs to the QueA family. Monomer.

The protein resides in the cytoplasm. It carries out the reaction 7-aminomethyl-7-carbaguanosine(34) in tRNA + S-adenosyl-L-methionine = epoxyqueuosine(34) in tRNA + adenine + L-methionine + 2 H(+). The protein operates within tRNA modification; tRNA-queuosine biosynthesis. Transfers and isomerizes the ribose moiety from AdoMet to the 7-aminomethyl group of 7-deazaguanine (preQ1-tRNA) to give epoxyqueuosine (oQ-tRNA). The polypeptide is S-adenosylmethionine:tRNA ribosyltransferase-isomerase (Campylobacter fetus subsp. fetus (strain 82-40)).